The following is a 190-amino-acid chain: DNA-invertase (190 aa).

The 134-residue stretch at 2–135 (ATIGYIRVST…AGLAAARAQG (134 aa)) folds into the Resolvase/invertase-type recombinase catalytic domain. Catalysis depends on Ser10, which acts as the O-(5'-phospho-DNA)-serine intermediate. The H-T-H motif DNA-binding region spans 162–181 (RQQLAIIFGIGVSTLYRYFP).

This sequence belongs to the site-specific recombinase resolvase family.

In terms of biological role, a DNA fragment of approximately 900 base pairs, adjacent to the fljB (H2) gene, which specifies the synthesis of phase-2 flagellin, can exist in either orientation with respect to fljB. The orientation of the inversion region controls expression of fljB. The hin gene occupies about two-thirds of the inversion region; it is required for the inversion of the fljB controlling region. This Salmonella abortus-equi protein is DNA-invertase (hin).